The sequence spans 1072 residues: Carbamoyl phosphate synthase large chain (1072 aa).

Residues 1 to 401 (MPKRLDINTI…SLLKAVRSLE (401 aa)) form a carboxyphosphate synthetic domain region. The ATP site is built by Arg129, Arg169, Gly175, Gly176, Lys208, Ile210, Glu215, Gly241, Val242, His243, Gln284, and Glu298. Residues 133 to 327 (RTLMQDLNEP…IAKLAAKIAV (195 aa)) form the ATP-grasp 1 domain. The Mg(2+) site is built by Gln284, Glu298, and Asn300. Positions 284, 298, and 300 each coordinate Mn(2+). The oligomerization domain stretch occupies residues 402 to 546 (LGIYHLELDH…YSTYAEENES (145 aa)). The carbamoyl phosphate synthetic domain stretch occupies residues 547–929 (IVTDRKSVVV…ALYKGLVASG (383 aa)). An ATP-grasp 2 domain is found at 671 to 861 (EAALTKLGIP…MANVATKVIL (191 aa)). Positions 707, 746, 752, 777, 778, 779, 780, 820, and 832 each coordinate ATP. Residues Gln820, Glu832, and Asn834 each coordinate Mg(2+). 3 residues coordinate Mn(2+): Gln820, Glu832, and Asn834. Positions 930-1072 (INIPTHGSVI…QTKRHEVVHA (143 aa)) constitute an MGS-like domain. The allosteric domain stretch occupies residues 930-1072 (INIPTHGSVI…QTKRHEVVHA (143 aa)).

The protein belongs to the CarB family. As to quaternary structure, composed of two chains; the small (or glutamine) chain promotes the hydrolysis of glutamine to ammonia, which is used by the large (or ammonia) chain to synthesize carbamoyl phosphate. Tetramer of heterodimers (alpha,beta)4. Requires Mg(2+) as cofactor. Mn(2+) serves as cofactor.

The enzyme catalyses hydrogencarbonate + L-glutamine + 2 ATP + H2O = carbamoyl phosphate + L-glutamate + 2 ADP + phosphate + 2 H(+). The catalysed reaction is hydrogencarbonate + NH4(+) + 2 ATP = carbamoyl phosphate + 2 ADP + phosphate + 2 H(+). It participates in amino-acid biosynthesis; L-arginine biosynthesis; carbamoyl phosphate from bicarbonate: step 1/1. It functions in the pathway pyrimidine metabolism; UMP biosynthesis via de novo pathway; (S)-dihydroorotate from bicarbonate: step 1/3. In terms of biological role, large subunit of the glutamine-dependent carbamoyl phosphate synthetase (CPSase). CPSase catalyzes the formation of carbamoyl phosphate from the ammonia moiety of glutamine, carbonate, and phosphate donated by ATP, constituting the first step of 2 biosynthetic pathways, one leading to arginine and/or urea and the other to pyrimidine nucleotides. The large subunit (synthetase) binds the substrates ammonia (free or transferred from glutamine from the small subunit), hydrogencarbonate and ATP and carries out an ATP-coupled ligase reaction, activating hydrogencarbonate by forming carboxy phosphate which reacts with ammonia to form carbamoyl phosphate. In Bacillus cereus (strain ATCC 10987 / NRS 248), this protein is Carbamoyl phosphate synthase large chain.